A 177-amino-acid chain; its full sequence is Co-chaperone protein HscB homolog (177 aa).

In terms of domain architecture, J spans 8–80 (DYFSLFGMPR…LSRAQYLLEL (73 aa)).

The protein belongs to the HscB family. Interacts with HscA and stimulates its ATPase activity.

Its function is as follows. Co-chaperone involved in the maturation of iron-sulfur cluster-containing proteins. Seems to help targeting proteins to be folded toward HscA. In Azoarcus sp. (strain BH72), this protein is Co-chaperone protein HscB homolog.